The chain runs to 362 residues: Adenosine deaminase (362 aa).

2 residues coordinate Zn(2+): H19 and H21. H21, D23, and G181 together coordinate substrate. A Zn(2+)-binding site is contributed by H208. E211 acts as the Proton donor in catalysis. D300 serves as a coordination point for Zn(2+).

Belongs to the metallo-dependent hydrolases superfamily. Adenosine and AMP deaminases family. Adenosine deaminase subfamily. It depends on Zn(2+) as a cofactor.

The enzyme catalyses adenosine + H2O + H(+) = inosine + NH4(+). It carries out the reaction 2'-deoxyadenosine + H2O + H(+) = 2'-deoxyinosine + NH4(+). Functionally, catalyzes the hydrolytic deamination of adenosine and 2-deoxyadenosine. The sequence is that of Adenosine deaminase from Mycobacterium leprae (strain TN).